Here is a 278-residue protein sequence, read N- to C-terminus: Undecaprenyl-diphosphatase (278 aa).

6 helical membrane passes run Phe-44–Tyr-64, Trp-84–Leu-104, Phe-112–Ile-132, Ser-187–Leu-207, Val-224–Phe-244, and Phe-254–Ile-274.

It belongs to the UppP family.

It localises to the cell membrane. The catalysed reaction is di-trans,octa-cis-undecaprenyl diphosphate + H2O = di-trans,octa-cis-undecaprenyl phosphate + phosphate + H(+). In terms of biological role, catalyzes the dephosphorylation of undecaprenyl diphosphate (UPP). Confers resistance to bacitracin. In Streptococcus suis (strain 98HAH33), this protein is Undecaprenyl-diphosphatase.